Here is a 463-residue protein sequence, read N- to C-terminus: Polyadenylate-binding protein-interacting protein 1 (463 aa).

A disordered region spans residues 1–86; that stretch reads MSDGFERAPG…HKRTSPAAQL (86 aa). In terms of domain architecture, MIF4G spans 145-362; that stretch reads TEYVQDFLNH…LKLVELRSSN (218 aa). Residues 420-442 form a disordered region; the sequence is RDYDENGTDGGDSYFEDDDDNEM. Over residues 433 to 442 the composition is skewed to acidic residues; that stretch reads YFEDDDDNEM.

In terms of assembly, interacts with the RRM1-RRM2 and C-terminal regions of epabp.

It localises to the cytoplasm. Acts as a coactivator in the regulation of translation initiation of poly(A)-containing mRNAs. The protein is Polyadenylate-binding protein-interacting protein 1 of Xenopus laevis (African clawed frog).